A 456-amino-acid chain; its full sequence is Shufflon protein D' (456 aa).

Residues 1–361 (MKKYDRGWAS…TGAILSCQSG (361 aa)) form a constant region region. The tract at residues 362 to 456 (TWRKSNSGST…KCSYVVACQN (95 aa)) is variable region.

The chain is Shufflon protein D' from Escherichia coli.